The primary structure comprises 340 residues: Ribosomal RNA small subunit methyltransferase C (340 aa).

Belongs to the methyltransferase superfamily. RsmC family. Monomer.

It localises to the cytoplasm. The enzyme catalyses guanosine(1207) in 16S rRNA + S-adenosyl-L-methionine = N(2)-methylguanosine(1207) in 16S rRNA + S-adenosyl-L-homocysteine + H(+). Functionally, specifically methylates the guanine in position 1207 of 16S rRNA in the 30S particle. This is Ribosomal RNA small subunit methyltransferase C from Vibrio cholerae serotype O1 (strain ATCC 39541 / Classical Ogawa 395 / O395).